Reading from the N-terminus, the 367-residue chain is bZIP transcription factor 18 (367 aa).

Positions 1-57 are disordered; the sequence is MEDPSNPQPNQSNLSQCPPLATAPTPAPVRGPYHRRAHSEVQFRLPEDLDLSEPFGG. The segment covering 38–47 has biased composition (basic and acidic residues); the sequence is HSEVQFRLPE. Ser70 carries the phosphoserine modification. Residues 79–124 are disordered; sequence SGSGSASDSAGPSAPRSDNPFSAENGGAEAGNSRPRHRHSLSVDGS. A compositionally biased stretch (low complexity) spans 82-96; sequence GSASDSAGPSAPRSD. Residues 148–211 form the bZIP domain; sequence DPKRAKRIIA…TGLSSENTEL (64 aa). The segment at 150–171 is basic motif; the sequence is KRAKRIIANRQSAARSKERKAR. Positions 166-245 form a coiled coil; the sequence is KERKARYILE…VERLKFATGE (80 aa). The leucine-zipper stretch occupies residues 176–190; sequence LERKVQTLQTEATTL. Composition is skewed to polar residues over residues 294–309, 317–328, and 354–367; these read QPNN…NPPT, ATSNAPAQSHSY, and FGRS…SSTM. Disordered regions lie at residues 294 to 330 and 343 to 367; these read QPNN…SYSE and LDIS…SSTM.

As to quaternary structure, interacts with NEAP1. Forms homodimer and heterodimer with bZIP34 and bZIP61. In terms of tissue distribution, ubiquitous. Strongly expressed in mature pollen.

The protein localises to the nucleus. Its subcellular location is the nucleoplasm. It localises to the cytoplasm. It is found in the perinuclear region. Functionally, transcription factor that may participate with bZIP34 in the gametophytic control of pollen development. The polypeptide is bZIP transcription factor 18 (Arabidopsis thaliana (Mouse-ear cress)).